Here is a 663-residue protein sequence, read N- to C-terminus: UvrABC system protein B (663 aa).

In terms of domain architecture, Helicase ATP-binding spans 31–418 (DNIEGGEKAQ…TDTVVEQIIR (388 aa)). Residue 44–51 (GATGTGKT) coordinates ATP. Residues 97 to 120 (YYDYYQPEAYVPSSDTYIEKDSSV) carry the Beta-hairpin motif. The 167-residue stretch at 435-601 (QMDDLLGEIN…TIKKEIRDLI (167 aa)) folds into the Helicase C-terminal domain. Residues 627-662 (QAEIKALQQQMQEAAELLDFELAAQIRDVILELKAI) form the UVR domain.

Belongs to the UvrB family. Forms a heterotetramer with UvrA during the search for lesions. Interacts with UvrC in an incision complex.

It localises to the cytoplasm. Its function is as follows. The UvrABC repair system catalyzes the recognition and processing of DNA lesions. A damage recognition complex composed of 2 UvrA and 2 UvrB subunits scans DNA for abnormalities. Upon binding of the UvrA(2)B(2) complex to a putative damaged site, the DNA wraps around one UvrB monomer. DNA wrap is dependent on ATP binding by UvrB and probably causes local melting of the DNA helix, facilitating insertion of UvrB beta-hairpin between the DNA strands. Then UvrB probes one DNA strand for the presence of a lesion. If a lesion is found the UvrA subunits dissociate and the UvrB-DNA preincision complex is formed. This complex is subsequently bound by UvrC and the second UvrB is released. If no lesion is found, the DNA wraps around the other UvrB subunit that will check the other stand for damage. This Streptococcus agalactiae serotype III (strain NEM316) protein is UvrABC system protein B.